Reading from the N-terminus, the 443-residue chain is Xaa-Pro dipeptidase (443 aa).

Mn(2+) contacts are provided by Asp244, Asp255, His339, Glu384, and Glu423.

This sequence belongs to the peptidase M24B family. Bacterial-type prolidase subfamily. Mn(2+) is required as a cofactor.

It carries out the reaction Xaa-L-Pro dipeptide + H2O = an L-alpha-amino acid + L-proline. Functionally, splits dipeptides with a prolyl residue in the C-terminal position. The chain is Xaa-Pro dipeptidase from Pseudoalteromonas atlantica (strain T6c / ATCC BAA-1087).